The following is a 219-amino-acid chain: Protein RhiB (219 aa).

Positions 174 to 195 are enriched in polar residues; the sequence is AGISQQGNAAGTSISSKSTGSP. The interval 174 to 201 is disordered; sequence AGISQQGNAAGTSISSKSTGSPENPART.

Functionally, may be involved in plant-microbe interaction. The protein is Protein RhiB (rhiB) of Rhizobium leguminosarum bv. viciae.